Reading from the N-terminus, the 2221-residue chain is Voltage-dependent L-type calcium channel subunit alpha-1C (2221 aa).

The segment at 1–20 (MVNENTRMYIPEENHQGSNY) is disordered. The Cytoplasmic segment spans residues 1–124 (MVNENTRMYI…RACISIVEWK (124 aa)). The calmodulin-binding stretch occupies residues 47–68 (GAALSWQAAIDAARQAKLMGSA). Residues 73-98 (ISTVSSTQRKRQQYGKPKKQGSTTAT) are disordered. The segment covering 80-91 (QRKRQQYGKPKK) has biased composition (basic residues). Residues 111–408 (NPIRRACISI…LVLGVLSGEF (298 aa)) form an I repeat. Residues 125–143 (PFEIIILLTIFANCVALAI) traverse the membrane as a helical segment. The Extracellular portion of the chain corresponds to 144-158 (YIPFPEDDSNATNSN). An N-linked (GlcNAc...) asparagine glycan is attached at Asn-153. Residues 159-179 (LERVEYLFLIIFTVEAFLKVI) form a helical membrane-spanning segment. The Cytoplasmic portion of the chain corresponds to 180-188 (AYGLLFHPN). A helical membrane pass occupies residues 189-209 (AYLRNGWNLLDFIIVVVGLFS). The Extracellular segment spans residues 210-232 (AILEQATKADGANALGGKGAGFD). Residues 233-251 (VKALRAFRVLRPLRLVSGV) traverse the membrane as a helical segment. At 252-268 (PSLQVVLNSIIKAMVPL) the chain is on the cytoplasmic side. Residues 269-290 (LHIALLVLFVIIIYAIIGLELF) form a helical membrane-spanning segment. Over 291 to 350 (MGKMHKTCYNQEGIADVPAEDDPSPCALETGHGRQCQNGTVCKPGWDGPKHGITNFDNFA) the chain is Extracellular. Disulfide bonds link Cys-298-Cys-326 and Cys-316-Cys-332. Asn-328 carries N-linked (GlcNAc...) asparagine glycosylation. An intramembrane region (pore-forming) is located at residues 351–372 (FAMLTVFQCITMEGWTDVLYWV). Positions 361–364 (TMEG) match the Selectivity filter of repeat I motif. Glu-363 provides a ligand contact to Ca(2+). The Extracellular segment spans residues 373–380 (NDAVGRDW). Residues 381–401 (PWIYFVTLIIIGSFFVLNLVL) traverse the membrane as a helical segment. At 402-524 (GVLSGEFSKE…RKCRAAVKSN (123 aa)) the chain is on the cytoplasmic side. Residues 428–445 (QQLEEDLKGYLDWITQAE) are AID/alpha-interaction domain; mediates interaction with the beta subunit. Residues 449-481 (PENEDEGMDEEKPRNMSMPTSETESVNTENVAG) are disordered. The span at 465-478 (SMPTSETESVNTEN) shows a compositional bias: polar residues. Ser-469 carries the phosphoserine modification. Thr-476 is subject to Phosphothreonine. Residues 510-756 (NRFCRRKCRA…VFLAIAVDNL (247 aa)) form an II repeat. Residues 525–543 (VFYWLVIFLVFLNTLTIAS) traverse the membrane as a helical segment. Residues 544 to 554 (EHYNQPNWLTE) lie on the Extracellular side of the membrane. Residues 555–575 (VQDTANKALLALFTAEMLLKM) form a helical membrane-spanning segment. At 576-586 (YSLGLQAYFVS) the chain is on the cytoplasmic side. A helical transmembrane segment spans residues 587–606 (LFNRFDCFVVCGGILETILV). Topologically, residues 607–615 (ETKIMSPLG) are extracellular. Residues 616–634 (ISVLRCVRLLRIFKITRYW) traverse the membrane as a helical segment. The Cytoplasmic portion of the chain corresponds to 635–653 (NSLSNLVASLLNSVRSIAS). A helical membrane pass occupies residues 654–673 (LLLLLFLFIIIFSLLGMQLF). Residues 674-693 (GGKFNFDEMQTRRSTFDNFP) lie on the Extracellular side of the membrane. An intramembrane region (pore-forming) is located at residues 694-715 (QSLLTVFQILTGEDWNSVMYDG). The Selectivity filter of repeat II signature appears at 704 to 707 (TGED). Glu-706 is a Ca(2+) binding site. Residues 716–725 (IMAYGGPSFP) lie on the Extracellular side of the membrane. The helical transmembrane segment at 726-745 (GMLVCIYFIILFICGNYILL) threads the bilayer. The Cytoplasmic portion of the chain corresponds to 746-900 (NVFLAIAVDN…LQCHRIVNDT (155 aa)). The interval 764–861 (SAQKEEEEEK…EMPVGPRPRP (98 aa)) is disordered. Positions 783–792 (SPEKKQELVE) are enriched in basic and acidic residues. Phosphoserine is present on residues Ser-808 and Ser-815. The tract at residues 829-876 (NENEDKSPYPNPETTGEEDEEEPEMPVGPRPRPLSELHLKEKAVPMPE) is interaction with STAC2. The segment covering 843 to 852 (TGEEDEEEPE) has biased composition (acidic residues). Residues 887 to 1189 (NRFRLQCHRI…IFVGFVIVTF (303 aa)) form an III repeat. A helical membrane pass occupies residues 901–919 (IFTNLILFFILLSSISLAA). Topologically, residues 920-931 (EDPVQHTSFRNH) are extracellular. Residues 932 to 952 (ILFYFDIVFTTIFTIEIALKI) traverse the membrane as a helical segment. Topologically, residues 953–987 (LGNADYVFTSIFTLEIILKMTAYGAFLHKGSFCRN) are cytoplasmic. Residues 988 to 1006 (YFNILDLLVVSVSLISFGI) traverse the membrane as a helical segment. Topologically, residues 1007–1013 (QSSAINV) are extracellular. The helical transmembrane segment at 1014–1032 (VKILRVLRVLRPLRAINRA) threads the bilayer. The Cytoplasmic portion of the chain corresponds to 1033 to 1051 (KGLKHVVQCVFVAIRTIGN). Residues 1052–1071 (IVIVTTLLQFMFACIGVQLF) form a helical membrane-spanning segment. The Extracellular portion of the chain corresponds to 1072–1121 (KGKLYTCSDSSKQTEAECKGNYITYKDGEVDHPIIQPRSWENSKFDFDNV). Cys-1078 and Cys-1089 are disulfide-bonded. Positions 1109-1198 (RSWENSKFDF…FQEQGEQEYK (90 aa)) are dihydropyridine binding. Residues 1122 to 1142 (LAAMMALFTVSTFEGWPELLY) constitute an intramembrane region (pore-forming). Residues 1133 to 1136 (TFEG) carry the Selectivity filter of repeat III motif. Residue Glu-1135 participates in Ca(2+) binding. At 1143-1159 (RSIDSHTEDKGPIYNYR) the chain is on the extracellular side. The helical transmembrane segment at 1160-1181 (VEISIFFIIYIIIIAFFMMNIF) threads the bilayer. Topologically, residues 1182–1239 (VGFVIVTFQEQGEQEYKNCELDKNQRQCVEYALKARPLRRYIPKNQHQYKVWYVVNST) are cytoplasmic. An IV repeat occupies 1226–1527 (NQHQYKVWYV…LFVAVIMDNF (302 aa)). Residues 1240–1261 (YFEYLMFVLILLNTICLAMQHY) form a helical membrane-spanning segment. Over 1262-1269 (GQSCLFKI) the chain is Extracellular. A helical transmembrane segment spans residues 1270–1291 (AMNILNMLFTGLFTVEMILKLI). The Cytoplasmic portion of the chain corresponds to 1292–1301 (AFKPKGYFSD). Residues 1302 to 1321 (PWNVFDFLIVIGSIIDVILS) form a helical membrane-spanning segment. Residues 1322–1372 (ETNHYFCDAWNTFDALIVVGSIVDIAITEVNPAEHTQCSPSMNAEENSRIS) lie on the Extracellular side of the membrane. A helical transmembrane segment spans residues 1373–1391 (ITFFRLFRVMRLVKLLSRG). Topologically, residues 1392–1409 (EGIRTLLWTFIKSFQALP) are cytoplasmic. A helical membrane pass occupies residues 1410–1430 (YVALLIVMLFFIYAVIGMQVF). Residues 1431–1452 (GKIALNDTTEINRNNNFQTFPQ) are Extracellular-facing. An N-linked (GlcNAc...) asparagine glycan is attached at Asn-1436. Residues 1453–1471 (AVLLLFRCATGEAWQDIML) constitute an intramembrane region (pore-forming). The Selectivity filter of repeat IV motif lies at 1462–1465 (TGEA). The Extracellular portion of the chain corresponds to 1472–1499 (ACMPGKKCAPESEPSNSTEGETPCGSSF). The segment at 1478–1546 (KCAPESEPSN…LGPHHLDEFK (69 aa)) is dihydropyridine binding. A disulfide bond links Cys-1479 and Cys-1495. Asn-1487 carries an N-linked (GlcNAc...) asparagine glycan. The segment at 1492 to 1534 (ETPCGSSFAVFYFISFYMLCAFLIINLFVAVIMDNFDYLTRDW) is phenylalkylamine binding. The chain crosses the membrane as a helical span at residues 1500-1524 (AVFYFISFYMLCAFLIINLFVAVIM). Residues 1525–2221 (DNFDYLTRDW…QDSRVYVSSL (697 aa)) lie on the Cytoplasmic side of the membrane. Positions 1659-1686 (DEVTVGKFYATFLIQEYFRKFKKRKEQG) are important for interaction with STAC1, STAC2 and STAC3. The segment at 1665–1685 (KFYATFLIQEYFRKFKKRKEQ) is calmodulin-binding IQ region. The interval 1699–1718 (LQAGLRTLHDIGPEIRRAIS) is important for localization in at the junctional membrane. Residues Ser-1718 and Ser-1739 each carry the phosphoserine modification. The segment at 1778–1847 (INKAGSSQGD…TVEGHGPPLS (70 aa)) is disordered. Positions 1799–1811 (STFTPSSYSSTGS) are enriched in polar residues. The span at 1812 to 1822 (NANINNANNTA) shows a compositional bias: low complexity. Position 1981 is a phosphoserine; by PKA (Ser-1981). Disordered stretches follow at residues 2029 to 2063 (ASFPRPFATPPATPGSRGWPPQPVPTLRLEGVESS) and 2186 to 2221 (AGQDRAGGEEDAGCVRARGRPSEEELQDSRVYVSSL).

Belongs to the calcium channel alpha-1 subunit (TC 1.A.1.11) family. CACNA1C subfamily. In terms of assembly, component of a calcium channel complex consisting of a pore-forming alpha subunit (CACNA1C) and ancillary beta, gamma and delta subunits. The channel complex contains alpha, beta, gamma and delta subunits in a 1:1:1:1 ratio, i.e. it contains only one of each type of subunit. CACNA1C channel activity is modulated by ancillary subunits, such as CACNB1, CACNB2, CACNB3, CACNA2D1 and CACNA2D4. Interacts with the gamma subunits CACNG4, CACNG6, CACNG7 and CACNG8. Interacts with CACNB1. Interacts with CACNB2. Identified in a complex with CACNA2D4 and CACNB3. Interacts with CACNB3. Interacts with CACNA2D1. Interacts with CACNA2D4. Interacts with CALM1. Interacts (via the N-terminus and the C-terminal C and IQ motifs) with CABP1; this inhibits Ca(2+)-dependent channel inactivation. The binding via the C motif is calcium independent whereas the binding via IQ requires the presence of calcium and is mutually exclusive with calmodulin binding. The binding to the cytoplasmic N-terminal domain is calcium independent but is essential for the channel modulation. Interacts (via C-terminal CDB motif) with CABP5; in a calcium-dependent manner. Interacts with CIB1; the interaction increases upon cardiomyocytes hypertrophy. Interacts with STAC2 and STAC3; this inhibits channel inactivation. (Microbial infection) Interacts with influenzavirus H1 hemagglutinin. Post-translationally, phosphorylation by PKA at Ser-1981 activates the channel. Elevated levels of blood glucose lead to increased phosphorylation by PKA. Detected throughout the brain, including hippocampus, cerebellum and amygdala, throughout the heart and vascular system, including ductus arteriosus, in urinary bladder, and in retina and sclera in the eye. Expressed in brain, heart, jejunum, ovary, pancreatic beta-cells and vascular smooth muscle. Overall expression is reduced in atherosclerotic vascular smooth muscle.

Its subcellular location is the cell membrane. The protein localises to the sarcolemma. The protein resides in the perikaryon. It localises to the postsynaptic density membrane. It is found in the cell projection. Its subcellular location is the dendrite. The protein localises to the T-tubule. It carries out the reaction Ca(2+)(in) = Ca(2+)(out). Its activity is regulated as follows. Inhibited by dihydropyridines (DHP), such as isradipine. Inhibited by nifedipine. Channel activity is regulated by Ca(2+) and calmodulin. Binding of STAC1, STAC2 or STAC3 to a region that overlaps with the calmodulin binding site inhibits channel inactivation by Ca(2+) and calmodulin. Binding of calmodulin or CABP1 at the same regulatory sites results in opposite effects on the channel function. Shear stress and pressure increases calcium channel activity. Its function is as follows. Pore-forming, alpha-1C subunit of the voltage-gated calcium channel that gives rise to L-type calcium currents. Mediates influx of calcium ions into the cytoplasm, and thereby triggers calcium release from the sarcoplasm. Plays an important role in excitation-contraction coupling in the heart. Required for normal heart development and normal regulation of heart rhythm. Required for normal contraction of smooth muscle cells in blood vessels and in the intestine. Essential for normal blood pressure regulation via its role in the contraction of arterial smooth muscle cells. Long-lasting (L-type) calcium channels belong to the 'high-voltage activated' (HVA) group. Pore-forming, alpha-1C subunit of the voltage-gated calcium channel that gives rise to L-type calcium currents. Functionally, (Microbial infection) Acts as a receptor for Influenzavirus. May play a critical role in allowing virus entry when sialylated and expressed on lung tissues. The chain is Voltage-dependent L-type calcium channel subunit alpha-1C (CACNA1C) from Homo sapiens (Human).